The primary structure comprises 280 residues: Pantothenate synthetase (280 aa).

ATP is bound at residue 31-38; it reads MGNLHAGH. The active-site Proton donor is His-38. Position 62 (Gln-62) interacts with (R)-pantoate. Gln-62 is a binding site for beta-alanine. ATP is bound at residue 150–153; that stretch reads GKKD. Gln-156 serves as a coordination point for (R)-pantoate. ATP contacts are provided by residues Val-179 and 187–190; that span reads MSSR.

Belongs to the pantothenate synthetase family. In terms of assembly, homodimer.

The protein resides in the cytoplasm. The catalysed reaction is (R)-pantoate + beta-alanine + ATP = (R)-pantothenate + AMP + diphosphate + H(+). It functions in the pathway cofactor biosynthesis; (R)-pantothenate biosynthesis; (R)-pantothenate from (R)-pantoate and beta-alanine: step 1/1. Its function is as follows. Catalyzes the condensation of pantoate with beta-alanine in an ATP-dependent reaction via a pantoyl-adenylate intermediate. The protein is Pantothenate synthetase of Xanthomonas axonopodis pv. citri (strain 306).